We begin with the raw amino-acid sequence, 341 residues long: MAPMGIRLSPLGIAVFCLLGVGVIYHLYAGVLSSRLAFFRQKRTVDLRELLALSIDAAVQGGREVKRIREDNTLEEKSKGKTKEGASEKYTLGDLNSHRKMYYLIKNTFPNIQVNSEEHANAEGEATVWTRMIPEDILAKVSGGKEIPAEKITVWIDPLDATQEYTENLLKYVTTMVCVAVDGEPVIGVIHKPFTGYTVWGFVGEGSNVAPRDSYNTNSPKVIVSRSHAGKVKSFVQTAFGNNTEIIPAGGAGYKALALLNPTDDKQETADIYIHVTYIKKWDICAGDAILKSLGGQMTTLKGEQIDYSGLEGNKGGLLASMKVDHKALVKRLPLWEDNKQ.

The chain crosses the membrane as a helical span at residues 11 to 31 (LGIAVFCLLGVGVIYHLYAGV). Mg(2+) is bound by residues E117, D157, L159, D160, and D283. Substrate is bound at residue E117. Substrate-binding positions include 159-162 (LDAT) and D283.

The protein belongs to the inositol monophosphatase superfamily. Mg(2+) is required as a cofactor.

It is found in the membrane. The catalysed reaction is a myo-inositol phosphate + H2O = myo-inositol + phosphate. It participates in polyol metabolism; myo-inositol biosynthesis; myo-inositol from D-glucose 6-phosphate: step 2/2. This is Inositol monophosphatase 3 (bpnt2) from Danio rerio (Zebrafish).